The primary structure comprises 143 residues: Regulator of ribonuclease activity B (143 aa).

Residues 113–143 form a disordered region; sequence EDPNAEEDEYGDDGEFFDDEDEADFNNAKVH. Residues 115 to 136 show a composition bias toward acidic residues; it reads PNAEEDEYGDDGEFFDDEDEAD.

Belongs to the RraB family. Interacts with the C-terminal region of Rne.

Its subcellular location is the cytoplasm. Its function is as follows. Globally modulates RNA abundance by binding to RNase E (Rne) and regulating its endonucleolytic activity. Can modulate Rne action in a substrate-dependent manner by altering the composition of the degradosome. In Haemophilus ducreyi (strain 35000HP / ATCC 700724), this protein is Regulator of ribonuclease activity B.